We begin with the raw amino-acid sequence, 64 residues long: Large ribosomal subunit protein bL28 (64 aa).

It belongs to the bacterial ribosomal protein bL28 family.

The sequence is that of Large ribosomal subunit protein bL28 from Campylobacter jejuni subsp. jejuni serotype O:6 (strain 81116 / NCTC 11828).